The primary structure comprises 362 residues: Cobalt-precorrin-5B C(1)-methyltransferase (362 aa).

Belongs to the CbiD family.

It carries out the reaction Co-precorrin-5B + S-adenosyl-L-methionine = Co-precorrin-6A + S-adenosyl-L-homocysteine. The protein operates within cofactor biosynthesis; adenosylcobalamin biosynthesis; cob(II)yrinate a,c-diamide from sirohydrochlorin (anaerobic route): step 6/10. In terms of biological role, catalyzes the methylation of C-1 in cobalt-precorrin-5B to form cobalt-precorrin-6A. The protein is Cobalt-precorrin-5B C(1)-methyltransferase of Burkholderia ambifaria (strain MC40-6).